A 51-amino-acid polypeptide reads, in one-letter code: Small ribosomal subunit protein eS31 (51 aa).

Zn(2+) contacts are provided by Cys-22, Cys-25, Cys-40, and Cys-43. The C4-type zinc finger occupies 22–43; sequence CPRCGPGVFMADHGDRWACGRC.

The protein belongs to the eukaryotic ribosomal protein eS31 family. In terms of assembly, part of the 30S ribosomal subunit. Zn(2+) is required as a cofactor.

The sequence is that of Small ribosomal subunit protein eS31 from Pyrococcus abyssi (strain GE5 / Orsay).